Reading from the N-terminus, the 608-residue chain is ESX-3 secretion system protein EccA3 (608 aa).

Residues Glu-284–Asp-303 form a disordered region. Positions Trp-290–Phe-301 are enriched in acidic residues. Gly-365–Thr-372 lines the ATP pocket.

Belongs to the CbxX/CfxQ family. In terms of assembly, part of the ESX-3 / type VII secretion system (T7SS), which is composed of cytosolic and membrane components.

It is found in the cytoplasm. Part of the ESX-3 specialized secretion system, which is required for siderophore-mediated iron acquisition and for the secretion of EsxH and EsxG. EccA3 exhibits ATPase activity and may provide energy for the export of ESX-3 substrates. This Mycolicibacterium smegmatis (strain ATCC 700084 / mc(2)155) (Mycobacterium smegmatis) protein is ESX-3 secretion system protein EccA3.